The sequence spans 115 residues: Large ribosomal subunit protein bL19 (115 aa).

The protein belongs to the bacterial ribosomal protein bL19 family.

Its function is as follows. This protein is located at the 30S-50S ribosomal subunit interface and may play a role in the structure and function of the aminoacyl-tRNA binding site. This is Large ribosomal subunit protein bL19 from Streptococcus equi subsp. zooepidemicus (strain H70).